Reading from the N-terminus, the 1002-residue chain is BTB/POZ domain-containing protein At1g04390 (1002 aa).

2 BTB domains span residues 680–758 and 808–889; these read SDMR…EVES and SDVI…PKPP.

The protein operates within protein modification; protein ubiquitination. In terms of biological role, may act as a substrate-specific adapter of an E3 ubiquitin-protein ligase complex (CUL3-RBX1-BTB) which mediates the ubiquitination and subsequent proteasomal degradation of target proteins. In Arabidopsis thaliana (Mouse-ear cress), this protein is BTB/POZ domain-containing protein At1g04390.